The primary structure comprises 8903 residues: Nonribosomal peptide synthetase vlms (8903 aa).

The Carrier 1 domain occupies 11 to 84 (GSCRTTLGKV…ELADSIDEQN (74 aa)). The interval 13 to 81 (CRTTLGKVAA…TLAELADSID (69 aa)) is thiolation (T) domain 1. An O-(pantetheine 4'-phosphoryl)serine modification is found at S45. Adenylation (A) domain stretches follow at residues 59-736 (GIWV…SHLP) and 989-1386 (MAAQ…IKIR). Residues 572 to 953 (VPHQLDTEKL…FLLDGVNMSI (382 aa)) are condensation (C) domain 1. The 77-residue stretch at 1524–1600 (SSMSTVEQEL…QLALAAESQA (77 aa)) folds into the Carrier 2 domain. Positions 1529 to 1597 (VEQELRQIWS…TIPQLALAAE (69 aa)) are thiolation (T) domain 2. S1561 is subject to O-(pantetheine 4'-phosphoryl)serine. Residues 1613–2050 (FPLSPIQKMY…TVKELAAVSA (438 aa)) are epimerase (E) domain 1. The segment at 2091 to 2523 (DILPCSPIQQ…LLSVSEENKL (433 aa)) is condensation (C) domain 2. The segment at 2546–2943 (MSSHADATAI…GRQDSQVKIR (398 aa)) is adenylation (A) domain 2. One can recognise a Carrier 3 domain in the interval 3084–3160 (LFTTAIERQL…ELALQAKMVD (77 aa)). The segment at 3089-3157 (IERQLRQVWS…TIPELALQAK (69 aa)) is thiolation (T) domain 3. The residue at position 3121 (S3121) is an O-(pantetheine 4'-phosphoryl)serine. Positions 3174–3614 (FALSPIQQMY…AIKSLVEELM (441 aa)) are epimerase (E) domain 2. Positions 3655–4093 (EDILPCSPMQ…LMSTKDIQQL (439 aa)) are condensation (C) domain 3. Residues 4114 to 4512 (ERLNTQPESM…GRIDTQIKIR (399 aa)) are adenylation (A) domain 3. The region spanning 4649–4725 (APRTTMEKKL…DLAEATELKC (77 aa)) is the Carrier 4 domain. The interval 4654 to 4722 (MEKKLRDLFA…ILADLAEATE (69 aa)) is thiolation (T) domain 4. S4686 is modified (O-(pantetheine 4'-phosphoryl)serine). The condensation (C) domain 4 stretch occupies residues 4775–5191 (EDVYPCSPLQ…AQLQMLSEED (417 aa)). The tract at residues 5216–5614 (ETMTSQPDAP…GRRDTQVKIR (399 aa)) is adenylation (A) domain 4. In terms of domain architecture, Carrier 5 spans 5753–5829 (APTTAMEKRL…DLAQELEQRH (77 aa)). The interval 5758 to 5826 (MEKRLQNLFC…RLGDLAQELE (69 aa)) is thiolation (T) domain 5. Position 5790 is an O-(pantetheine 4'-phosphoryl)serine (S5790). E5875 is a region of interest (condensation (C) domain 5). Residues 6311-6702 (EEQMSLRPSE…GRMDGQIKIR (392 aa)) are adenylation (A) domain 5. The region spanning 6836–6912 (SSATNTERQL…ELAATLEVMD (77 aa)) is the Carrier 6 domain. Positions 6841 to 6909 (TERQLRQIWS…TIPELAATLE (69 aa)) are thiolation (T) domain 6. S6873 bears the O-(pantetheine 4'-phosphoryl)serine mark. The epimerase (E) domain 3 stretch occupies residues 6923 to 7349 (GFFELSPIQR…YGRTIKTLVE (427 aa)). The condensation (C) domain 6 stretch occupies residues 7391–7823 (EDILPCSPIQ…LVLTNDEAQI (433 aa)). The interval 7844-8240 (EQMARKPEAQ…LDRIGTQVKI (397 aa)) is adenylation (A) domain 6. The region spanning 8368 to 8444 (APISATEAVF…AMAACVSDVS (77 aa)) is the Carrier 7 domain. Residues 8369-8441 (PISATEAVFC…VLHAMAACVS (73 aa)) form a thiolation (T) domain 7 region. S8405 carries the post-translational modification O-(pantetheine 4'-phosphoryl)serine. Residues 8482 to 8897 (DVLPTTEFQT…MENPRSTVGH (416 aa)) form a condensation (C) domain 7 region.

This sequence belongs to the NRP synthetase family.

It participates in secondary metabolite biosynthesis. In terms of biological role, nonribosomal peptide synthetase; part of the gene cluster that mediates the biosynthesis of verlamelin, a lipopeptide that exhibits antifungal activity against plant pathogenic fungi. Verlamelin is a cyclic hexadepsipeptide and is bridged by ester bonding between a 5-hydroxytetradecanoic acid moiety and a carboxyl group on the terminal Val of amide-bonded tetradecanoyl-hexapeptide D-allo-Thr-D-Ala-L-Pro-L-Gln-D-Tyr-L-Val. VlmA and vlmB are altogether regarded as essential components in the biosynthesis of 5-hydroxytetradecanoic acid. VlmA catalyzes the hydroxylation at position C5 of tetradecanoic acid produced in primary metabolism, while the precise function of vlmB still remains to be solved. To be loaded onto the waiting NRPS, 5-hydroxytetradecanoic acid is activated in the form of acyladenylate by the AMP-dependent ligase vlmC. VlmS seems to accept the fatty-acyl intermediate onto the initial module to further elongate amino acid residues by the downstream modules. In addition, in the last module at its C-terminus, vlmS contains a surplus condensation (C) domain that may be involved in cyclization, the last step to form verlamelin. This chain is Nonribosomal peptide synthetase vlms, found in Lecanicillium sp.